Here is a 419-residue protein sequence, read N- to C-terminus: Divinyl chlorophyllide a 8-vinyl-reductase, chloroplastic (419 aa).

The transit peptide at 1 to 71 (MSICSTVGAG…PIVVSSTPVV (71 aa)) directs the protein to the chloroplast.

The protein localises to the plastid. It localises to the chloroplast. It catalyses the reaction protochlorophyllide a + NADP(+) = 3,8-divinyl protochlorophyllide a + NADPH + H(+). The protein operates within porphyrin-containing compound metabolism; chlorophyll biosynthesis. Functionally, catalyzes the conversion of divinyl chlorophyllide to monovinyl chlorophyllide. Reduces the 8-vinyl group of the tetrapyrrole to an ethyl group using NADPH as the reductant. The best substrate is (3,8-divinyl)-chlorophyllide a (DV-Chlidea). Very low activity with (3,8-divinyl)-protochlorophyllide a (DV-Pchlidea) and (3,8-divinyl)-magnesium-protoporphyrin IX monomethyl ester (DV-MPE). No activity with (3,8-divinyl)-magnesium-protoporphyrin IX (DV-Mg-Proto) and (3,8-divinyl)-chlorophyll a (DV-Chla). The chain is Divinyl chlorophyllide a 8-vinyl-reductase, chloroplastic (DVR) from Cucumis sativus (Cucumber).